The following is a 214-amino-acid chain: Killer cell lectin-like receptor subfamily B member 1 (214 aa).

Over 1–42 the chain is Cytoplasmic; that stretch reads MDAPVLYAELNLAETRGLRCTSAPSLPQDACQGPGWHRVALK. Residues 43–63 traverse the membrane as a helical; Signal-anchor for type II membrane protein segment; sequence LGCAGLIFLLMVLSVLVGFLV. At 64–214 the chain is on the extracellular side; it reads QKPLIEKCSV…WICQKTLKHV (151 aa). The C-type lectin domain maps to 98 to 208; it reads HCDKCLFTSQ…CSSDNHWICQ (111 aa). Disulfide bonds link C119–C207 and C186–C199.

It is found in the membrane. This chain is Killer cell lectin-like receptor subfamily B member 1 (Klrb1), found in Mus musculus (Mouse).